Here is a 277-residue protein sequence, read N- to C-terminus: Energy-coupling factor transporter ATP-binding protein EcfA1 (277 aa).

An ABC transporter domain is found at 5–240 (LEVENLVFKY…SEDMVEIGLD (236 aa)). 40-47 (GQNGSGKS) is an ATP binding site. Glu166 acts as the Proton acceptor in catalysis.

It belongs to the ABC transporter superfamily. Energy-coupling factor EcfA family. As to quaternary structure, forms a stable energy-coupling factor (ECF) transporter complex composed of 2 membrane-embedded substrate-binding proteins (S component), 2 ATP-binding proteins (A component) and 2 transmembrane proteins (T component). In L.lactis forms a stable complex with EcfA' and EcfT and substrate-binding components. In E.coli forms a stable complex with EcfA', EcfT and individually with 3 tested substrate-binding components (BioY, NiaX and ThiT) with a stoichiometry of 1.1:1:1. The core ECF complex interacts with a number of substrate-specific binding components, including BioY, BioY2, HmpT, NiaX, PanT, QueT, RibU and ThiT.

The protein resides in the cell membrane. Functionally, ATP-binding (A) component of a common energy-coupling factor (ECF) ABC-transporter complex. Unlike classic ABC transporters this ECF transporter provides the energy necessary to transport a number of different substrates. In this organism these probably include biotin, thiamine precursor, niacin, pantothenic acid, queuosine precursor, riboflavin and thiamine. Uptake of niacin or riboflavin into proteosomes containing EcfA1A2T and Niax or RibU has been demonstrated. Uptake requires hydrolyzable Mg-ATP and is substrate-specific; NiaX-containing proteosomes did not transport riboflavin. This is Energy-coupling factor transporter ATP-binding protein EcfA1 from Lactococcus lactis subsp. cremoris (strain MG1363).